Reading from the N-terminus, the 63-residue chain is Prokaryotic ubiquitin-like protein Pup (63 aa).

Residues 1–35 (MSGQQSQINAGGGNGQGGDTPEFDAGQVSINSAGT) form a disordered region. Residues 19-57 (DTPEFDAGQVSINSAGTDDLLDEIDGLLESNAEEFVRSY) are ARC ATPase binding. Residue E63 forms an Isoglutamyl lysine isopeptide (Glu-Lys) (interchain with K-? in acceptor proteins) linkage.

It belongs to the prokaryotic ubiquitin-like protein family. Strongly interacts with the proteasome-associated ATPase ARC through a hydrophobic interface; the interacting region of Pup lies in its C-terminal half. There is one Pup binding site per ARC hexamer ring.

It participates in protein degradation; proteasomal Pup-dependent pathway. Protein modifier that is covalently attached to lysine residues of substrate proteins, thereby targeting them for proteasomal degradation. The tagging system is termed pupylation. This Corynebacterium aurimucosum (strain ATCC 700975 / DSM 44827 / CIP 107346 / CN-1) (Corynebacterium nigricans) protein is Prokaryotic ubiquitin-like protein Pup.